The following is a 310-amino-acid chain: Homoserine O-acetyltransferase (310 aa).

Residue Cys142 is the Acyl-thioester intermediate of the active site. Residues Lys163 and Ser192 each coordinate substrate. His235 serves as the catalytic Proton acceptor. Glu237 is an active-site residue. Position 249 (Arg249) interacts with substrate.

It belongs to the MetA family.

The protein localises to the cytoplasm. The enzyme catalyses L-homoserine + acetyl-CoA = O-acetyl-L-homoserine + CoA. Its pathway is amino-acid biosynthesis; L-methionine biosynthesis via de novo pathway; O-acetyl-L-homoserine from L-homoserine: step 1/1. Functionally, transfers an acetyl group from acetyl-CoA to L-homoserine, forming acetyl-L-homoserine. The sequence is that of Homoserine O-acetyltransferase from Agathobacter rectalis (strain ATCC 33656 / DSM 3377 / JCM 17463 / KCTC 5835 / VPI 0990) (Eubacterium rectale).